We begin with the raw amino-acid sequence, 105 residues long: Small ribosomal subunit protein uS10c (105 aa).

It belongs to the universal ribosomal protein uS10 family. As to quaternary structure, part of the 30S ribosomal subunit.

It localises to the plastid. The protein localises to the chloroplast. Involved in the binding of tRNA to the ribosomes. The sequence is that of Small ribosomal subunit protein uS10c from Pyropia yezoensis (Susabi-nori).